Here is a 297-residue protein sequence, read N- to C-terminus: Myozenin-1 (297 aa).

Residues 1-34 form a disordered region; it reads MPLSGTPAPNKKRKSSKLIMELTGGGQESSGLNL. At S82 the chain carries Phosphoserine. A disordered region spans residues 105 to 172; that stretch reads FSYSKSSGGG…ALPDNQAGGE (68 aa). The span at 118 to 128 shows a compositional bias: low complexity; sequence RSGSAGQYGSD. Gly residues predominate over residues 136–162; the sequence is SGSGSGSGSGPGSGGAGGPGGHSGRGG.

Belongs to the myozenin family. In terms of assembly, interacts with ACTN2, ACTN3, FLNA, FLNB, FLNC, LDB3, PPP3CA and TCAP. Interacts via its C-terminal region with MYOT.

Its subcellular location is the nucleus. The protein localises to the cell projection. It is found in the pseudopodium. Myozenins may serve as intracellular binding proteins involved in linking Z-disk proteins such as alpha-actinin, gamma-filamin, TCAP/telethonin, LDB3/ZASP and localizing calcineurin signaling to the sarcomere. Plays an important role in the modulation of calcineurin signaling. May play a role in myofibrillogenesis. The polypeptide is Myozenin-1 (MYOZ1) (Bos taurus (Bovine)).